A 433-amino-acid chain; its full sequence is Serine hydroxymethyltransferase (433 aa).

(6S)-5,6,7,8-tetrahydrofolate contacts are provided by residues leucine 121 and 125 to 127 (GHI). N6-(pyridoxal phosphate)lysine is present on lysine 231.

The protein belongs to the SHMT family. In terms of assembly, homodimer. It depends on pyridoxal 5'-phosphate as a cofactor.

The protein localises to the cytoplasm. Its pathway is amino-acid biosynthesis; glycine biosynthesis; glycine from L-serine: step 1/1. Its function is as follows. Catalyzes the reversible interconversion of serine and glycine with a modified folate serving as the one-carbon carrier. Also exhibits a pteridine-independent aldolase activity toward beta-hydroxyamino acids, producing glycine and aldehydes, via a retro-aldol mechanism. This chain is Serine hydroxymethyltransferase, found in Picrophilus torridus (strain ATCC 700027 / DSM 9790 / JCM 10055 / NBRC 100828 / KAW 2/3).